The sequence spans 163 residues: Glyoxalase domain-containing protein 5 (163 aa).

A VOC domain is found at 41–161 (HLDHLVLTVR…DDNLIEVSNY (121 aa)).

This sequence belongs to the glyoxalase I family.

The protein is Glyoxalase domain-containing protein 5 (glod5) of Danio rerio (Zebrafish).